The following is a 268-amino-acid chain: Tryptophan synthase alpha chain (268 aa).

Catalysis depends on proton acceptor residues Glu-49 and Asp-60.

Belongs to the TrpA family. Tetramer of two alpha and two beta chains.

It catalyses the reaction (1S,2R)-1-C-(indol-3-yl)glycerol 3-phosphate + L-serine = D-glyceraldehyde 3-phosphate + L-tryptophan + H2O. It functions in the pathway amino-acid biosynthesis; L-tryptophan biosynthesis; L-tryptophan from chorismate: step 5/5. The alpha subunit is responsible for the aldol cleavage of indoleglycerol phosphate to indole and glyceraldehyde 3-phosphate. This is Tryptophan synthase alpha chain from Serratia proteamaculans (strain 568).